The following is a 333-amino-acid chain: Holliday junction branch migration complex subunit RuvB (333 aa).

Residues 1–182 are large ATPase domain (RuvB-L); that stretch reads MDERLLSGES…FGVLSRLEYY (182 aa). ATP is bound by residues leucine 21, arginine 22, glycine 63, lysine 66, threonine 67, threonine 68, 129–131, arginine 172, tyrosine 182, and arginine 219; that span reads EDF. Threonine 67 contacts Mg(2+). Residues 183-253 are small ATPAse domain (RuvB-S); that stretch reads TVDQLSAIVE…ITQMALELLQ (71 aa). A head domain (RuvB-H) region spans residues 256-333; it reads KLGLDHIDHK…EHFGMEMPKV (78 aa). Arginine 311 and arginine 316 together coordinate DNA.

This sequence belongs to the RuvB family. As to quaternary structure, homohexamer. Forms an RuvA(8)-RuvB(12)-Holliday junction (HJ) complex. HJ DNA is sandwiched between 2 RuvA tetramers; dsDNA enters through RuvA and exits via RuvB. An RuvB hexamer assembles on each DNA strand where it exits the tetramer. Each RuvB hexamer is contacted by two RuvA subunits (via domain III) on 2 adjacent RuvB subunits; this complex drives branch migration. In the full resolvosome a probable DNA-RuvA(4)-RuvB(12)-RuvC(2) complex forms which resolves the HJ.

It is found in the cytoplasm. The catalysed reaction is ATP + H2O = ADP + phosphate + H(+). Functionally, the RuvA-RuvB-RuvC complex processes Holliday junction (HJ) DNA during genetic recombination and DNA repair, while the RuvA-RuvB complex plays an important role in the rescue of blocked DNA replication forks via replication fork reversal (RFR). RuvA specifically binds to HJ cruciform DNA, conferring on it an open structure. The RuvB hexamer acts as an ATP-dependent pump, pulling dsDNA into and through the RuvAB complex. RuvB forms 2 homohexamers on either side of HJ DNA bound by 1 or 2 RuvA tetramers; 4 subunits per hexamer contact DNA at a time. Coordinated motions by a converter formed by DNA-disengaged RuvB subunits stimulates ATP hydrolysis and nucleotide exchange. Immobilization of the converter enables RuvB to convert the ATP-contained energy into a lever motion, pulling 2 nucleotides of DNA out of the RuvA tetramer per ATP hydrolyzed, thus driving DNA branch migration. The RuvB motors rotate together with the DNA substrate, which together with the progressing nucleotide cycle form the mechanistic basis for DNA recombination by continuous HJ branch migration. Branch migration allows RuvC to scan DNA until it finds its consensus sequence, where it cleaves and resolves cruciform DNA. In Bacillus anthracis (strain A0248), this protein is Holliday junction branch migration complex subunit RuvB.